Here is a 337-residue protein sequence, read N- to C-terminus: Tryptophan--tRNA ligase 2 (337 aa).

ATP-binding positions include 13–15 and 22–23; these read QPT and GN. The 'HIGH' region motif lies at 14-23; sequence PTAGSFHLGN. An L-tryptophan-binding site is contributed by aspartate 139. Residues 151–153, isoleucine 190, and 199–203 contribute to the ATP site; these read GED and KMSKS. The 'KMSKS' region signature appears at 199-203; sequence KMSKS.

This sequence belongs to the class-I aminoacyl-tRNA synthetase family. In terms of assembly, homodimer.

It is found in the cytoplasm. It carries out the reaction tRNA(Trp) + L-tryptophan + ATP = L-tryptophyl-tRNA(Trp) + AMP + diphosphate + H(+). Its function is as follows. Catalyzes the attachment of tryptophan to tRNA(Trp). This chain is Tryptophan--tRNA ligase 2, found in Streptomyces avermitilis (strain ATCC 31267 / DSM 46492 / JCM 5070 / NBRC 14893 / NCIMB 12804 / NRRL 8165 / MA-4680).